A 370-amino-acid polypeptide reads, in one-letter code: Gap junction delta-4 protein (370 aa).

Topologically, residues 1–19 are cytoplasmic; sequence MEGVDLLGFLIITLNCNVT. A helical membrane pass occupies residues 20 to 40; it reads MVGKLWFVLTMLLRMLVIVLA. The Extracellular portion of the chain corresponds to 41 to 76; it reads GRPVYQDEQERFVCNTLQPGCANVCYDVFSPVSHLR. The chain crosses the membrane as a helical span at residues 77-97; the sequence is FWLIQGVCVLLPSAVFSVYVL. Residues 98-146 lie on the Cytoplasmic side of the membrane; sequence HRGATLAALGPRRCPDPREPASGQRRCPRPFGERGGLQVPDFSAGYIIH. The chain crosses the membrane as a helical span at residues 147 to 167; it reads LLLRTLLEAAFGALHYFLFGF. Over 168–196 the chain is Extracellular; sequence LAPKKFPCTRPPCTGVVDCYVSRPTEKSL. The helical transmembrane segment at 197–217 threads the bilayer; the sequence is LMLFLWAVSALSFLLGLADLV. The Cytoplasmic portion of the chain corresponds to 218–370; that stretch reads CSLRRRMRRR…HLRARKSEWV (153 aa). Positions 224 to 370 are disordered; that stretch reads MRRRPGPPTS…HLRARKSEWV (147 aa). The span at 246 to 260 shows a compositional bias: basic and acidic residues; that stretch reads AEGRRTDEEGGREEE. Over residues 331-346 the composition is skewed to low complexity; the sequence is PSAAPSRLAAPPSCSS.

Belongs to the connexin family. Delta-type subfamily. In terms of assembly, a connexon is composed of a hexamer of connexins. Expressed in pancreas, kidney, skeletal muscle, liver, placenta, and heart.

It is found in the cell membrane. The protein localises to the cell junction. Its subcellular location is the gap junction. In terms of biological role, one gap junction consists of a cluster of closely packed pairs of transmembrane channels, the connexons, through which materials of low MW diffuse from one cell to a neighboring cell. This chain is Gap junction delta-4 protein (GJD4), found in Homo sapiens (Human).